The primary structure comprises 311 residues: Protoheme IX farnesyltransferase (311 aa).

The next 9 membrane-spanning stretches (helical) occupy residues Ile-38–Met-58, Tyr-62–Ile-82, Leu-113–Trp-133, Leu-134–Leu-154, Ile-162–Gly-182, Pro-188–Ile-208, Phe-230–Phe-250, Leu-251–Ile-271, and Ala-286–Ala-306.

The protein belongs to the UbiA prenyltransferase family. Protoheme IX farnesyltransferase subfamily.

The protein resides in the cell inner membrane. It carries out the reaction heme b + (2E,6E)-farnesyl diphosphate + H2O = Fe(II)-heme o + diphosphate. It participates in porphyrin-containing compound metabolism; heme O biosynthesis; heme O from protoheme: step 1/1. Its function is as follows. Converts heme B (protoheme IX) to heme O by substitution of the vinyl group on carbon 2 of heme B porphyrin ring with a hydroxyethyl farnesyl side group. This Psychromonas ingrahamii (strain DSM 17664 / CCUG 51855 / 37) protein is Protoheme IX farnesyltransferase.